The following is a 393-amino-acid chain: Bifunctional enzyme IspD/IspF (393 aa).

The tract at residues 1–234 is 2-C-methyl-D-erythritol 4-phosphate cytidylyltransferase; sequence MTTSQRTAAI…ARLAASLGDI (234 aa). Positions 235-393 are 2-C-methyl-D-erythritol 2,4-cyclodiphosphate synthase; the sequence is RTGTGYDVHA…SATIRLPWGA (159 aa). A divalent metal cation-binding residues include Asp-241 and His-243. 4-CDP-2-C-methyl-D-erythritol 2-phosphate is bound by residues 241–243 and 267–268; these read DVH and HS. His-275 is a binding site for a divalent metal cation. Residues 289-291, 365-368, Phe-372, and Arg-375 each bind 4-CDP-2-C-methyl-D-erythritol 2-phosphate; these read DIG and TTSE.

This sequence in the N-terminal section; belongs to the IspD/TarI cytidylyltransferase family. IspD subfamily. It in the C-terminal section; belongs to the IspF family. Requires a divalent metal cation as cofactor.

It catalyses the reaction 2-C-methyl-D-erythritol 4-phosphate + CTP + H(+) = 4-CDP-2-C-methyl-D-erythritol + diphosphate. It carries out the reaction 4-CDP-2-C-methyl-D-erythritol 2-phosphate = 2-C-methyl-D-erythritol 2,4-cyclic diphosphate + CMP. The protein operates within isoprenoid biosynthesis; isopentenyl diphosphate biosynthesis via DXP pathway; isopentenyl diphosphate from 1-deoxy-D-xylulose 5-phosphate: step 2/6. It functions in the pathway isoprenoid biosynthesis; isopentenyl diphosphate biosynthesis via DXP pathway; isopentenyl diphosphate from 1-deoxy-D-xylulose 5-phosphate: step 4/6. Its function is as follows. Bifunctional enzyme that catalyzes the formation of 4-diphosphocytidyl-2-C-methyl-D-erythritol from CTP and 2-C-methyl-D-erythritol 4-phosphate (MEP) (IspD), and catalyzes the conversion of 4-diphosphocytidyl-2-C-methyl-D-erythritol 2-phosphate (CDP-ME2P) to 2-C-methyl-D-erythritol 2,4-cyclodiphosphate (ME-CPP) with a corresponding release of cytidine 5-monophosphate (CMP) (IspF). This Bradyrhizobium sp. (strain ORS 278) protein is Bifunctional enzyme IspD/IspF.